The following is a 298-amino-acid chain: ATP phosphoribosyltransferase (298 aa).

This sequence belongs to the ATP phosphoribosyltransferase family. Long subfamily. Requires Mg(2+) as cofactor.

The protein localises to the cytoplasm. The catalysed reaction is 1-(5-phospho-beta-D-ribosyl)-ATP + diphosphate = 5-phospho-alpha-D-ribose 1-diphosphate + ATP. Its pathway is amino-acid biosynthesis; L-histidine biosynthesis; L-histidine from 5-phospho-alpha-D-ribose 1-diphosphate: step 1/9. Its activity is regulated as follows. Feedback inhibited by histidine. Functionally, catalyzes the condensation of ATP and 5-phosphoribose 1-diphosphate to form N'-(5'-phosphoribosyl)-ATP (PR-ATP). Has a crucial role in the pathway because the rate of histidine biosynthesis seems to be controlled primarily by regulation of HisG enzymatic activity. In Aliivibrio fischeri (strain ATCC 700601 / ES114) (Vibrio fischeri), this protein is ATP phosphoribosyltransferase.